Here is a 151-residue protein sequence, read N- to C-terminus: Large ribosomal subunit protein bL9 (151 aa).

It belongs to the bacterial ribosomal protein bL9 family.

Its function is as follows. Binds to the 23S rRNA. The protein is Large ribosomal subunit protein bL9 of Nitrosomonas europaea (strain ATCC 19718 / CIP 103999 / KCTC 2705 / NBRC 14298).